A 308-amino-acid polypeptide reads, in one-letter code: Putative S-adenosyl-L-methionine-dependent methyltransferase Mjls_1073 (308 aa).

S-adenosyl-L-methionine is bound by residues D133 and D162–L163.

This sequence belongs to the UPF0677 family.

In terms of biological role, exhibits S-adenosyl-L-methionine-dependent methyltransferase activity. The protein is Putative S-adenosyl-L-methionine-dependent methyltransferase Mjls_1073 of Mycobacterium sp. (strain JLS).